An 832-amino-acid polypeptide reads, in one-letter code: Prickle-like protein 1 (832 aa).

One can recognise a PET domain in the interval 14-122; it reads FGCQRSSTSD…TIKLLSRAVM (109 aa). LIM zinc-binding domains follow at residues 124–188, 189–249, and 250–313; these read AVCE…ELLK, PRCS…LYAE, and YCET…EDIH. Residues 314 to 342 are disordered; the sequence is ASDSSDSAFQSARSRDSRRSVRMGRSSRS. 3 positions are modified to phosphoserine: S315, S592, and S595. Disordered regions lie at residues 663–688 and 765–832; these read HFEERGSRPHHHRHRRSRKSRSDNAL and SSST…CIIS. Positions 670–681 are enriched in basic residues; it reads RPHHHRHRRSRK. The residue at position 684 (S684) is a Phosphoserine. The segment covering 798–815 has biased composition (polar residues); that stretch reads DLSSPASALPTPQFTQRT. Basic residues predominate over residues 816-832; that stretch reads TKSKKKKGHKGKNCIIS. Position 829 is a cysteine methyl ester (C829). A lipid anchor (S-farnesyl cysteine) is attached at C829. The propeptide at 830–832 is removed in mature form; the sequence is IIS.

It belongs to the prickle / espinas / testin family. Interacts with REST.

The protein localises to the nucleus membrane. It is found in the cytoplasm. It localises to the cytosol. In terms of biological role, involved in the planar cell polarity pathway that controls convergent extension during gastrulation and neural tube closure. Convergent extension is a complex morphogenetic process during which cells elongate, move mediolaterally, and intercalate between neighboring cells, leading to convergence toward the mediolateral axis and extension along the anteroposterior axis. Necessary for nuclear localization of REST. May serve as nuclear receptor. This chain is Prickle-like protein 1 (Prickle1), found in Mus musculus (Mouse).